The chain runs to 1108 residues: Topless-related protein 3 (1108 aa).

Positions 4–36 (LSRELVFLILQFLEEEKFKESVHRLEKESGFFF) constitute a LisH domain. The CTLH domain maps to 34–92 (FFFNTKYFDEKVLAGEWDDVETYLSGFTKVDDNRYSMKIFFEIRKQKYLEALDRQEKAK). A Phosphoserine modification is found at Ser214. 6 WD repeats span residues 343–383 (HQGS…RLVS), 405–444 (ETPI…DLRQ), 450–491 (AHVG…HFTF), 493–534 (GHDA…SRVD), 583–623 (EFQK…VLTS), and 628–667 (GGLP…RSLR). A disordered region spans residues 706-725 (HSQMLNGVDPSKSRIDDSTD). Residues 716–725 (SKSRIDDSTD) are compositionally biased toward basic and acidic residues. WD repeat units follow at residues 751–790 (GSST…QNPS), 818–856 (NLEN…VMTT), 859–899 (PPPP…VKSK), 902–941 (GHQK…KRKS), and 994–1033 (SLSA…LRCR). The tract at residues 1084–1108 (GMIPPSEAINSPSTTSNQTPEQLQR) is disordered. The span at 1091-1108 (AINSPSTTSNQTPEQLQR) shows a compositional bias: polar residues.

As to quaternary structure, tetramer. Interacts with NINJA/AFPH2. Interacts with SMXL6. Interacts with SPL (via EAR motif). Interacts with SPEAR3/TIE1.

It localises to the nucleus. Transcriptional corepressor. Negative regulator of jasmonate responses. This is Topless-related protein 3 (TPR3) from Arabidopsis thaliana (Mouse-ear cress).